Consider the following 252-residue polypeptide: 5-oxoprolinase subunit A (252 aa).

The protein belongs to the LamB/PxpA family. In terms of assembly, forms a complex composed of PxpA, PxpB and PxpC.

The catalysed reaction is 5-oxo-L-proline + ATP + 2 H2O = L-glutamate + ADP + phosphate + H(+). Catalyzes the cleavage of 5-oxoproline to form L-glutamate coupled to the hydrolysis of ATP to ADP and inorganic phosphate. The protein is 5-oxoprolinase subunit A of Mycobacterium marinum (strain ATCC BAA-535 / M).